The primary structure comprises 322 residues: Myeloid-associated differentiation marker (322 aa).

The segment covering 1–18 has biased composition (low complexity); sequence MPVTVTRTTITTTTTSSS. The tract at residues 1–21 is disordered; it reads MPVTVTRTTITTTTTSSSGLG. S22 carries the phosphoserine modification. MARVEL domains lie at 31–163 and 168–319; these read ALTQ…ARPG and YMAT…HLVF. Transmembrane regions (helical) follow at residues 41–61, 70–90, 101–121, 137–157, 171–191, 203–223, 239–259, and 294–314; these read LLQL…GAWT, FTWC…LCGL, FPIT…IIYP, AIAA…EVAW, TVPG…FAFI, LEWC…AILL, FLSG…VLWP, and LAVA…LVHS.

Belongs to the MAL family. As to expression, widely expressed. Not detected in thymus.

It is found in the membrane. This is Myeloid-associated differentiation marker (MYADM) from Homo sapiens (Human).